A 205-amino-acid chain; its full sequence is Adenylyl-sulfate kinase (205 aa).

39–46 (GLSGAGKS) is a binding site for ATP. Ser113 (phosphoserine intermediate) is an active-site residue.

The protein belongs to the APS kinase family.

It catalyses the reaction adenosine 5'-phosphosulfate + ATP = 3'-phosphoadenylyl sulfate + ADP + H(+). It functions in the pathway sulfur metabolism; hydrogen sulfide biosynthesis; sulfite from sulfate: step 2/3. In terms of biological role, catalyzes the synthesis of activated sulfate. In Vibrio parahaemolyticus serotype O3:K6 (strain RIMD 2210633), this protein is Adenylyl-sulfate kinase.